The chain runs to 447 residues: 3-O-methyltransferase 2 (447 aa).

S-adenosyl-L-methionine is bound by residues G264–G265, D287, D318–F319, and R334. H338 acts as the Proton acceptor in catalysis.

Belongs to the class I-like SAM-binding methyltransferase superfamily. Cation-independent O-methyltransferase family. COMT subfamily.

Functionally, S-adenosyl-L-methionine-dependent methyltransferase that preferentially catalyzes the methylation of 3-OH phenolic compounds like isovanillic acid and 3-OH-4-Met cinnamic acid. May play a role in promoting lignin degradation by methylating and inactivating free-hydroxyl phenolic compounds, products of lignin cleavage which are known inhibitors of lignin peroxidases. The sequence is that of 3-O-methyltransferase 2 from Phanerochaete chrysosporium (strain RP-78 / ATCC MYA-4764 / FGSC 9002) (White-rot fungus).